The primary structure comprises 101 residues: UPF0473 protein STER_1939 (101 aa).

This sequence belongs to the UPF0473 family.

The protein is UPF0473 protein STER_1939 of Streptococcus thermophilus (strain ATCC BAA-491 / LMD-9).